Reading from the N-terminus, the 449-residue chain is Exodeoxyribonuclease 7 large subunit (449 aa).

It belongs to the XseA family. Heterooligomer composed of large and small subunits.

It localises to the cytoplasm. It carries out the reaction Exonucleolytic cleavage in either 5'- to 3'- or 3'- to 5'-direction to yield nucleoside 5'-phosphates.. In terms of biological role, bidirectionally degrades single-stranded DNA into large acid-insoluble oligonucleotides, which are then degraded further into small acid-soluble oligonucleotides. This chain is Exodeoxyribonuclease 7 large subunit, found in Salmonella dublin (strain CT_02021853).